Consider the following 187-residue polypeptide: Elongation factor P (187 aa).

It belongs to the elongation factor P family.

The protein localises to the cytoplasm. It functions in the pathway protein biosynthesis; polypeptide chain elongation. Functionally, involved in peptide bond synthesis. Stimulates efficient translation and peptide-bond synthesis on native or reconstituted 70S ribosomes in vitro. Probably functions indirectly by altering the affinity of the ribosome for aminoacyl-tRNA, thus increasing their reactivity as acceptors for peptidyl transferase. This Clavibacter michiganensis subsp. michiganensis (strain NCPPB 382) protein is Elongation factor P.